The chain runs to 196 residues: Imidazoleglycerol-phosphate dehydratase (196 aa).

It belongs to the imidazoleglycerol-phosphate dehydratase family.

The protein localises to the cytoplasm. The enzyme catalyses D-erythro-1-(imidazol-4-yl)glycerol 3-phosphate = 3-(imidazol-4-yl)-2-oxopropyl phosphate + H2O. Its pathway is amino-acid biosynthesis; L-histidine biosynthesis; L-histidine from 5-phospho-alpha-D-ribose 1-diphosphate: step 6/9. The protein is Imidazoleglycerol-phosphate dehydratase of Clostridium botulinum (strain ATCC 19397 / Type A).